The primary structure comprises 564 residues: 5-aminolevulinate synthase, mitochondrial (564 aa).

The N-terminal 57 residues, methionine 1–tyrosine 57, are a transit peptide targeting the mitochondrion. 3 residues coordinate substrate: arginine 113, serine 226, and lysine 245. Pyridoxal 5'-phosphate-binding residues include serine 278, histidine 306, and threonine 350. Lysine 353 is an active-site residue. Lysine 353 carries the post-translational modification N6-(pyridoxal phosphate)lysine. Threonine 382 and threonine 383 together coordinate pyridoxal 5'-phosphate. Threonine 468 lines the substrate pocket.

Belongs to the class-II pyridoxal-phosphate-dependent aminotransferase family. In terms of assembly, homodimer. Pyridoxal 5'-phosphate serves as cofactor.

Its subcellular location is the mitochondrion matrix. It catalyses the reaction succinyl-CoA + glycine + H(+) = 5-aminolevulinate + CO2 + CoA. It participates in porphyrin-containing compound metabolism; protoporphyrin-IX biosynthesis; 5-aminolevulinate from glycine: step 1/1. Catalyzes the synthesis of 5-aminolevulinate (ALA) from succinyl-CoA and glycine, the first and rate-limiting step in heme biosynthesis. This is 5-aminolevulinate synthase, mitochondrial (HEM1) from Candida albicans (strain SC5314 / ATCC MYA-2876) (Yeast).